The following is a 357-amino-acid chain: Probable cinnamyl alcohol dehydrogenase (357 aa).

Cysteine 47 is a binding site for Zn(2+). Serine 49 lines the NADP(+) pocket. The Zn(2+) site is built by histidine 69, glutamate 70, cysteine 100, cysteine 103, cysteine 106, cysteine 114, and cysteine 163. Residues threonine 167, glycine 188–glycine 193, serine 211–lysine 216, threonine 251, glycine 275, and serine 298–isoleucine 300 each bind NADP(+).

Belongs to the zinc-containing alcohol dehydrogenase family. In terms of assembly, homodimer. The cofactor is Zn(2+).

The catalysed reaction is (E)-cinnamyl alcohol + NADP(+) = (E)-cinnamaldehyde + NADPH + H(+). It carries out the reaction (E)-coniferol + NADP(+) = (E)-coniferaldehyde + NADPH + H(+). The enzyme catalyses (E)-sinapyl alcohol + NADP(+) = (E)-sinapaldehyde + NADPH + H(+). It catalyses the reaction (E)-4-coumaroyl alcohol + NADP(+) = (E)-4-coumaraldehyde + NADPH + H(+). The catalysed reaction is (E)-caffeyl alcohol + NADP(+) = (E)-caffeyl aldehyde + NADPH + H(+). Its pathway is aromatic compound metabolism; phenylpropanoid biosynthesis. In terms of biological role, involved in lignin biosynthesis. Catalyzes the final step specific for the production of lignin monomers. Catalyzes the NADPH-dependent reduction of coniferaldehyde, 5-hydroxyconiferaldehyde, sinapaldehyde, 4-coumaraldehyde and caffeyl aldehyde to their respective alcohols. This chain is Probable cinnamyl alcohol dehydrogenase, found in Pinus taeda (Loblolly pine).